Consider the following 597-residue polypeptide: Cytosolic phospholipase A2 gamma (597 aa).

The 597-residue stretch at 1–597 (MELSSGVCPA…FKKSHNISKD (597 aa)) folds into the PLA2c domain. The Nucleophile role is filled by serine 83. Aspartate 417 functions as the Proton acceptor in the catalytic mechanism. The disordered stretch occupies residues 576–597 (RVKDPQGSQTVEFKKSHNISKD). Positions 587 to 597 (EFKKSHNISKD) are enriched in basic and acidic residues.

In terms of tissue distribution, highly expressed in ovary, where it localizes to oocytes in preantral and antral stage follicles (at protein level). Not detected in other tissues tested.

The protein resides in the nucleus. The protein localises to the nucleoplasm. It is found in the nucleus envelope. It localises to the cytoplasm. Its subcellular location is the cell cortex. The protein resides in the cytoskeleton. The protein localises to the spindle. It catalyses the reaction a 1,2-diacyl-sn-glycero-3-phosphocholine + H2O = a 1-acyl-sn-glycero-3-phosphocholine + a fatty acid + H(+). It carries out the reaction a 1-O-alkyl-2-acyl-sn-glycero-3-phosphocholine + H2O = a 1-O-alkyl-sn-glycero-3-phosphocholine + a fatty acid + H(+). The enzyme catalyses 1,2-dihexadecanoyl-sn-glycero-3-phosphocholine + H2O = 1-hexadecanoyl-sn-glycero-3-phosphocholine + hexadecanoate + H(+). The catalysed reaction is 1-hexadecanoyl-2-(9Z-octadecenoyl)-sn-glycero-3-phosphocholine + H2O = 1-hexadecanoyl-sn-glycero-3-phosphocholine + (9Z)-octadecenoate + H(+). It catalyses the reaction 1-hexadecanoyl-2-(9Z,12Z-octadecadienoyl)-sn-glycero-3-phosphocholine + H2O = (9Z,12Z)-octadecadienoate + 1-hexadecanoyl-sn-glycero-3-phosphocholine + H(+). It carries out the reaction 1-hexadecanoyl-2-(5Z,8Z,11Z,14Z-eicosatetraenoyl)-sn-glycero-3-phosphocholine + H2O = 1-hexadecanoyl-sn-glycero-3-phosphocholine + (5Z,8Z,11Z,14Z)-eicosatetraenoate + H(+). The enzyme catalyses 1-O-hexadecyl-2-(5Z,8Z,11Z,14Z)-eicosatetraenoyl-sn-glycero-3-phosphocholine + H2O = 1-O-hexadecyl-sn-glycero-3-phosphocholine + (5Z,8Z,11Z,14Z)-eicosatetraenoate + H(+). The catalysed reaction is 1-hexadecanoyl-2-(5Z,8Z,11Z,14Z-eicosatetraenoyl)-sn-glycero-3-phosphocholine + H2O = 2-(5Z,8Z,11Z,14Z)-eicosatetraenoyl-sn-glycero-3-phosphocholine + hexadecanoate + H(+). It catalyses the reaction a 1-acyl-sn-glycero-3-phosphocholine + H2O = sn-glycerol 3-phosphocholine + a fatty acid + H(+). It carries out the reaction 1-hexadecanoyl-sn-glycero-3-phosphocholine + H2O = sn-glycerol 3-phosphocholine + hexadecanoate + H(+). The enzyme catalyses 2 1-hexadecanoyl-sn-glycero-3-phosphocholine = 1,2-dihexadecanoyl-sn-glycero-3-phosphocholine + sn-glycerol 3-phosphocholine. The catalysed reaction is 1-hexadecanoyl-sn-glycero-3-phosphoethanolamine + 1-hexadecanoyl-sn-glycero-3-phosphocholine = 1,2-dihexadecanoyl-sn-glycero-3-phosphoethanolamine + sn-glycerol 3-phosphocholine. It catalyses the reaction 1-hexadecanoyl-sn-glycero-3-phosphoethanolamine + 1-hexadecanoyl-sn-glycero-3-phosphocholine = sn-glycero-3-phosphoethanolamine + 1,2-dihexadecanoyl-sn-glycero-3-phosphocholine. It carries out the reaction 2 1-hexadecanoyl-sn-glycero-3-phosphoethanolamine = 1,2-dihexadecanoyl-sn-glycero-3-phosphoethanolamine + sn-glycero-3-phosphoethanolamine. The enzyme catalyses 1-O-hexadecyl-sn-glycero-3-phosphocholine + 1-hexadecanoyl-sn-glycero-3-phosphocholine = 1-O-hexadecyl-2-hexadecanoyl-sn-glycero-3-phosphocholine + sn-glycerol 3-phosphocholine. The catalysed reaction is a 1-O-(1Z-alkenyl)-sn-glycero-3-phosphoethanolamine + 1-hexadecanoyl-sn-glycero-3-phosphocholine = 1-O-(1Z)-alkenyl-2-hexadecanoyl-sn-glycero-3-phosphoethanolamine + sn-glycerol 3-phosphocholine. It catalyses the reaction 1-O-hexadecyl-sn-glycero-3-phosphocholine + 1-hexadecanoyl-sn-glycero-3-phosphoethanolamine = 1-O-hexadecyl-2-hexadecanoyl-sn-glycero-3-phosphocholine + sn-glycero-3-phosphoethanolamine. It carries out the reaction 1-octadecanoyl-2-(5Z,8Z,11Z,14Z)-eicosatetraenoyl-sn-glycero-3-phosphoethanolamine + 1-hexadecanoyl-sn-glycero-3-phosphocholine = 1-octadecanoyl-sn-glycero-3-phosphoethanolamine + 1-hexadecanoyl-2-(5Z,8Z,11Z,14Z-eicosatetraenoyl)-sn-glycero-3-phosphocholine. The enzyme catalyses 1-octadecanoyl-2-(5Z,8Z,11Z,14Z)-eicosatetraenoyl-sn-glycero-3-phosphoethanolamine + 1-O-hexadecyl-sn-glycero-3-phosphocholine = 1-octadecanoyl-sn-glycero-3-phosphoethanolamine + 1-O-hexadecyl-2-(5Z,8Z,11Z,14Z)-eicosatetraenoyl-sn-glycero-3-phosphocholine. The catalysed reaction is 1-hexadecanoyl-2-(9Z,12Z-octadecadienoyl)-sn-glycero-3-phosphocholine + a 1-O-(1Z-alkenyl)-sn-glycero-3-phosphoethanolamine = 1-O-(1Z-alkenyl)-2-(9Z,12Z-octadecadienoyl)-sn-glycero-3-phosphoethanolamine + 1-hexadecanoyl-sn-glycero-3-phosphocholine. It catalyses the reaction 1-hexadecanoyl-2-(5Z,8Z,11Z,14Z-eicosatetraenoyl)-sn-glycero-3-phosphocholine + a 1-O-(1Z-alkenyl)-sn-glycero-3-phosphoethanolamine = 1-O-(1Z)-alkenyl-2-(5Z,8Z,11Z,14Z)-eicosatetraenoyl-sn-glycero-3-phosphoethanolamine + 1-hexadecanoyl-sn-glycero-3-phosphocholine. Calcium-independent phospholipase, lysophospholipase and O-acyltransferase involved in phospholipid remodeling. Preferentially hydrolyzes the ester bond of the fatty acyl group attached at sn-2 position of phospholipids with choline and ethanolamine head groups, producing lysophospholipids that are used in deacylation-reacylation cycles. Transfers the sn-1 fatty acyl from one lysophospholipid molecule to the sn-2 position of another lysophospholipid to form diacyl, alkylacyl and alkenylacyl glycerophospholipids. Cleaves ester bonds but not alkyl or alkenyl ether bonds at the sn-1 position of lysophospholipids. Catalyzes sn-2 fatty acyl transfer from phospholipids to the sn-2 position of 1-O-alkyl or 1-O-alkenyl lysophospholipids with lower efficiency. The chain is Cytosolic phospholipase A2 gamma from Mus musculus (Mouse).